Consider the following 1088-residue polypeptide: RNA-directed RNA polymerase (1088 aa).

Residues 501-687 enclose the RdRp catalytic domain; the sequence is LSYGDVTRFL…AKRYIAGGKI (187 aa).

The protein belongs to the reoviridae RNA-directed RNA polymerase family. As to quaternary structure, interacts with VP3 (Potential). Interacts with VP2; this interaction activates VP1. Interacts with NSP5; this interaction is probably necessary for the formation of functional virus factories. Interacts with NSP2; this interaction is weak. Mg(2+) serves as cofactor.

It is found in the virion. The catalysed reaction is RNA(n) + a ribonucleoside 5'-triphosphate = RNA(n+1) + diphosphate. Its function is as follows. RNA-directed RNA polymerase that is involved in both transcription and genome replication. Together with VP3 capping enzyme, forms an enzyme complex positioned near the channels situated at each of the five-fold vertices of the core. Following infection, the outermost layer of the virus is lost, leaving a double-layered particle (DLP) made up of the core and VP6 shell. VP1 then catalyzes the transcription of fully conservative plus-strand genomic RNAs that are extruded through the DLP's channels into the cytoplasm where they function as mRNAs for translation of viral proteins. One copy of each of the viral (+)RNAs is also recruited during core assembly, together with newly synthesized polymerase complexes and VP2. The polymerase of these novo-formed particles catalyzes the synthesis of complementary minus-strands leading to dsRNA formation. To do so, the polymerase specifically recognizes and binds 4 bases 5'-UGUG-3' in the conserved 3'-sequence of plus-strand RNA templates. VP2 presumably activates the autoinhibited VP1-RNA complex to coordinate packaging and genome replication. Once dsRNA synthesis is complete, the polymerase switches to the transcriptional mode, thus providing secondary transcription. The polypeptide is RNA-directed RNA polymerase (Chlorocebus pygerythrus (Vervet monkey)).